Reading from the N-terminus, the 155-residue chain is Deoxyuridine 5'-triphosphate nucleotidohydrolase (155 aa).

Substrate-binding positions include 71–73, Asn-84, 88–90, and Lys-98; these read RSG and TID.

It belongs to the dUTPase family. Requires Mg(2+) as cofactor.

The enzyme catalyses dUTP + H2O = dUMP + diphosphate + H(+). Its pathway is pyrimidine metabolism; dUMP biosynthesis; dUMP from dCTP (dUTP route): step 2/2. Its function is as follows. This enzyme is involved in nucleotide metabolism: it produces dUMP, the immediate precursor of thymidine nucleotides and it decreases the intracellular concentration of dUTP so that uracil cannot be incorporated into DNA. The chain is Deoxyuridine 5'-triphosphate nucleotidohydrolase from Corynebacterium jeikeium (strain K411).